Here is a 296-residue protein sequence, read N- to C-terminus: Protoheme IX farnesyltransferase 1 (296 aa).

Transmembrane regions (helical) follow at residues 14–34 (IVLLLVITAVTTMYAGDALSA), 41–61 (LWDYAHLMAAGALASAGSSAL), 86–106 (IGENIVLAYGLAISSAAVVYA), 108–128 (FLLNAPTAFFIALGIFSYVII), 141–161 (IVIGGIAGSAASWAGWTAATG), 165–185 (LLGFLIGFLVFVWTPSHFWCL), 230–250 (AFGMGLVYLVIAVASGGLMLV), and 274–294 (YLTIIFAAVALDAAFHYPFPF).

This sequence belongs to the UbiA prenyltransferase family. Protoheme IX farnesyltransferase subfamily.

The protein resides in the cell membrane. The enzyme catalyses heme b + (2E,6E)-farnesyl diphosphate + H2O = Fe(II)-heme o + diphosphate. Its pathway is porphyrin-containing compound metabolism; heme O biosynthesis; heme O from protoheme: step 1/1. Converts heme B (protoheme IX) to heme O by substitution of the vinyl group on carbon 2 of heme B porphyrin ring with a hydroxyethyl farnesyl side group. In Cenarchaeum symbiosum (strain A), this protein is Protoheme IX farnesyltransferase 1.